A 724-amino-acid chain; its full sequence is Propionyl-CoA carboxylase alpha chain, mitochondrial (724 aa).

Residues 48–495 form the Biotin carboxylation domain; it reads KFDKILIANR…TTKYLPEVYP (448 aa). Residues lysine 163, 195–256, glutamate 247, and asparagine 282 contribute to the ATP site; that span reads SRDI…PRHI. One can recognise an ATP-grasp domain in the interval 167 to 364; that stretch reads KKIATAARVS…IVQQMLRVSY (198 aa). Glutamate 322, glutamate 335, and asparagine 337 together coordinate Mg(2+). The Mn(2+) site is built by glutamate 322, glutamate 335, and asparagine 337. Residue arginine 339 is part of the active site. Phenylalanine 395 serves as a coordination point for biotin. A Biotinyl-binding domain is found at 649–724; sequence KAKVDLSTVV…DEGEVLVELE (76 aa). The residue at position 690 (lysine 690) is an N6-biotinyllysine.

As to quaternary structure, the holoenzyme is a dodecamer composed of 6 alpha subunits and 6 beta subunits. Interacts with sir-2.2 and sir-2.3. Requires biotin as cofactor. The cofactor is Mg(2+). Mn(2+) is required as a cofactor. The biotin cofactor is covalently attached to the C-terminal biotinyl-binding domain and is required for the catalytic activity.

Its subcellular location is the mitochondrion matrix. The catalysed reaction is propanoyl-CoA + hydrogencarbonate + ATP = (S)-methylmalonyl-CoA + ADP + phosphate + H(+). The enzyme catalyses butanoyl-CoA + hydrogencarbonate + ATP = (2S)-ethylmalonyl-CoA + ADP + phosphate + H(+). Its pathway is metabolic intermediate metabolism; propanoyl-CoA degradation; succinyl-CoA from propanoyl-CoA: step 1/3. Functionally, this is one of the 2 subunits of the biotin-dependent propionyl-CoA carboxylase (PCC), a mitochondrial enzyme involved in the catabolism of odd chain fatty acids, branched-chain amino acids isoleucine, threonine, methionine, and valine and other metabolites. Propionyl-CoA carboxylase catalyzes the carboxylation of propionyl-CoA/propanoyl-CoA to D-methylmalonyl-CoA/(S)-methylmalonyl-CoA. Within the holoenzyme, the alpha subunit catalyzes the ATP-dependent carboxylation of the biotin carried by the biotin carboxyl carrier (BCC) domain, while the beta subunit then transfers the carboxyl group from carboxylated biotin to propionyl-CoA. Propionyl-CoA carboxylase also significantly acts on butyryl-CoA/butanoyl-CoA, which is converted to ethylmalonyl-CoA/(2S)-ethylmalonyl-CoA. Other alternative minor substrates include (2E)-butenoyl-CoA/crotonoyl-CoA. This chain is Propionyl-CoA carboxylase alpha chain, mitochondrial (pcca-1), found in Caenorhabditis elegans.